The sequence spans 529 residues: L-ornithine N(5)-monooxygenase (529 aa).

FAD is bound by residues 100–108 (EKQPQFAWH) and Gln119. Lys124 is a substrate binding site. Val185 contacts FAD. 270-273 (NGQS) contacts NADP(+). Substrate is bound by residues 309–312 (NEIF) and Asn339. Position 339–341 (339–341 (NYG)) interacts with NADP(+). 493–495 (TLL) is an FAD binding site. A substrate-binding site is contributed by Ser496.

Belongs to the lysine N(6)-hydroxylase/L-ornithine N(5)-oxygenase family. As to quaternary structure, homotetramer. It depends on FAD as a cofactor.

The catalysed reaction is L-ornithine + NADPH + O2 = N(5)-hydroxy-L-ornithine + NADP(+) + H2O. It catalyses the reaction L-ornithine + NADH + O2 = N(5)-hydroxy-L-ornithine + NAD(+) + H2O. Its pathway is siderophore biosynthesis. L-ornithine N(5)-monooxygenase; part of the gene cluster that mediates the biosynthesis of hydroxamate-containing siderophores that play a critical role in virulence. Cochliobolus heterostrophus produces extracellular coprogen-type siderophores including coprogen, neocoprogen I and neocoprogen II, as well as the intracellular siderophore ferricrocin. The role of extracellular siderophores is to supply iron to their producers in planta and the intracellular ferricrocin is required for intracellular iron distribution and storage with a crucial role in ascus and ascospore development. SIDA2 catalyzes the conversion of L-ornithine to N(5)-hydroxyornithine, the first step in the biosynthesis of all hydroxamate-containing siderophores. The assembly of extracellular coprogen-type siderophores is then performed by the nonribosomal peptide synthetase (NRPS) NPS6 whereas the intracellular siderophore ferricrocin is assembled by NPS2. The polypeptide is L-ornithine N(5)-monooxygenase (Cochliobolus heterostrophus (strain C4 / ATCC 48331 / race T) (Southern corn leaf blight fungus)).